The sequence spans 223 residues: Ras-related protein Rab-32 (223 aa).

N-acetylalanine is present on A2. Positions 34, 35, 36, 37, 38, 49, 50, 52, and 55 each coordinate GTP. T37 contributes to the Mg(2+) binding site. The Switch 1 signature appears at 46-60; that stretch reads QLFSQHYRATIGVDF. T55 serves as a coordination point for Mg(2+). Position 69 is a phosphoserine (S69). Residue D79 coordinates Mg(2+). Residues G82, N141, K142, D144, A173, and K174 each contribute to the GTP site. Positions 82–95 match the Switch 2 motif; it reads GQERFGNMTRVYYK. The PKA-RII subunit binding domain stretch occupies residues 176 to 195; sequence NINIDEATRFLVENMLANQQ. Residues C222 and C223 are each lipidated (S-geranylgeranyl cysteine).

Belongs to the small GTPase superfamily. Rab family. In terms of assembly, interacts with ANKRD27. A decreased interaction with ANKRD27 seen in the presence of SGSM2. Interacts with LRRK2 (via N-terminus); this interaction results in stimulation of RAB10 phosphorylation by LRRK2. Mg(2+) is required as a cofactor. As to expression, widely expressed with highest levels in liver. Strong expression also found in melanocyte, platelet, mast cell and fibroblast cell lines.

The protein resides in the mitochondrion. It localises to the mitochondrion outer membrane. The protein localises to the cytoplasmic vesicle. Its subcellular location is the phagosome. It is found in the phagosome membrane. The protein resides in the melanosome. It localises to the melanosome membrane. The catalysed reaction is GTP + H2O = GDP + phosphate + H(+). Regulated by guanine the nucleotide exchange factor (GEF) BLOC-3 complex composed of HPS1 and HPS4 which promote the exchange of bound GDP for free GTP. Regulated by the GTPase activating protein (GAP) SGSM2/RUTBC1 which increases the GTP hydrolysis activity. Inhibited by GDP dissociation inhibitors (GDIs) which prevent Rab-GDP dissociation. Functionally, the small GTPases Rab are key regulators of intracellular membrane trafficking, from the formation of transport vesicles to their fusion with membranes. Rabs cycle between an inactive GDP-bound form and an active GTP-bound form that is able to recruit to membranes different set of downstream effectors directly responsible for vesicle formation, movement, tethering and fusion. Also acts as an A-kinase anchoring protein by binding to the type II regulatory subunit of protein kinase A and anchoring it to the mitochondrion. Also involved in synchronization of mitochondrial fission. Plays a role in the maturation of phagosomes that engulf pathogens, such as S.aureus and M.tuberculosis. Plays an important role in the control of melanin production and melanosome biogenesis. In concert with RAB38, regulates the proper trafficking of melanogenic enzymes TYR, TYRP1 and DCT/TYRP2 to melanosomes in melanocytes. Stimulates phosphorylation of RAB10 'Thr-73' by LRRK2. The chain is Ras-related protein Rab-32 from Mus musculus (Mouse).